Consider the following 39-residue polypeptide: Large ribosomal subunit protein bL36 (39 aa).

This sequence belongs to the bacterial ribosomal protein bL36 family.

The polypeptide is Large ribosomal subunit protein bL36 (Leuconostoc mesenteroides subsp. mesenteroides (strain ATCC 8293 / DSM 20343 / BCRC 11652 / CCM 1803 / JCM 6124 / NCDO 523 / NBRC 100496 / NCIMB 8023 / NCTC 12954 / NRRL B-1118 / 37Y)).